The following is a 75-amino-acid chain: Pi-hexatoxin-Hi1d (75 aa).

Disulfide bonds link C3–C18, C10–C23, C17–C33, C40–C55, C47–C60, and C54–C71. 2 Domain repeats span residues 3–33 (CIRK…FEVC) and 40–71 (CLVK…SSVC). The 2 X approximate repeats with cysteine pattern C-C-CC-C-C stretch occupies residues 3–71 (CIRKWLSCVD…KRSGNKSSVC (69 aa)).

The protein belongs to the psalmotoxin-1 family. Double-knot toxin subfamily. Expressed by the venom gland.

It localises to the secreted. In terms of biological role, this toxin potently and selectively inhibits ASIC1a, an isoform of the gene ASIC1. It incompletely inhibits ASIC1a activation in a pH-independent and slowly reversible manner. This toxin acts by binding to and stabilizing the closed state of the channel, thereby impeding the transition into a conducting state. This toxin may bind to the acidic pocket of ASIC1a, since mutation of a key residue of this pocket (Arg-350) abolishes the ability of the toxin to inhibit ASIC1a. In vivo, this toxin protects the brain from neuronal injury when administered up to 8 hours after stroke onset. The chain is Pi-hexatoxin-Hi1d from Hadronyche infensa (Fraser island funnel-web spider).